The primary structure comprises 131 residues: Glycine cleavage system H protein (131 aa).

Residues 24–106 form the Lipoyl-binding domain; the sequence is RVTVGISDHA…YGEGWIFVVE (83 aa). K65 carries the N6-lipoyllysine modification.

It belongs to the GcvH family. As to quaternary structure, the glycine cleavage system is composed of four proteins: P, T, L and H. Requires (R)-lipoate as cofactor.

Its function is as follows. The glycine cleavage system catalyzes the degradation of glycine. The H protein shuttles the methylamine group of glycine from the P protein to the T protein. The protein is Glycine cleavage system H protein of Xanthomonas campestris pv. campestris (strain 8004).